We begin with the raw amino-acid sequence, 494 residues long: Metalloprotease TIKI1 (494 aa).

The signal sequence occupies residues 1 to 25; the sequence is MTMMTMMMVSWSAFLQICWILMVRA. Residues 26-467 are Extracellular-facing; it reads NQFNPGEPSG…QEHERANHDR (442 aa). 2 N-linked (GlcNAc...) asparagine glycosylation sites follow: N234 and N282. A helical transmembrane segment spans residues 468–488; the sequence is TFSGSSSRTGPALSALAVCVQ. The Cytoplasmic portion of the chain corresponds to 489–494; it reads MLRLLL.

It belongs to the TIKI family. Mn(2+) serves as cofactor. Requires Co(2+) as cofactor.

Its subcellular location is the cell membrane. Functionally, metalloprotease that acts as a negative regulator of the Wnt signaling pathway by mediating the cleavage of the N-terminal residues of a subset of Wnt proteins. Following cleavage, Wnt proteins become oxidized and form large disulfide-bond oligomers, leading to their inactivation. The protein is Metalloprotease TIKI1 (trabd2a) of Danio rerio (Zebrafish).